The following is a 102-amino-acid chain: Large ribosomal subunit protein bL21 (102 aa).

This sequence belongs to the bacterial ribosomal protein bL21 family. Part of the 50S ribosomal subunit. Contacts protein L20.

Its function is as follows. This protein binds to 23S rRNA in the presence of protein L20. This Phytoplasma australiense protein is Large ribosomal subunit protein bL21.